The sequence spans 369 residues: Protein RecA (369 aa).

Residues 1-10 show a composition bias toward basic and acidic residues; that stretch reads MARTTDDSKK. Positions 1-20 are disordered; that stretch reads MARTTDDSKKAAPAAGTADE. An ATP-binding site is contributed by 82–89; sequence GPESSGKT. The interval 350 to 369 is disordered; it reads PAAAVAAPDEGDDDLGDEEV. A compositionally biased stretch (acidic residues) spans 358–369; the sequence is DEGDDDLGDEEV.

Belongs to the RecA family.

It is found in the cytoplasm. Its function is as follows. Can catalyze the hydrolysis of ATP in the presence of single-stranded DNA, the ATP-dependent uptake of single-stranded DNA by duplex DNA, and the ATP-dependent hybridization of homologous single-stranded DNAs. It interacts with LexA causing its activation and leading to its autocatalytic cleavage. The protein is Protein RecA of Gloeobacter violaceus (strain ATCC 29082 / PCC 7421).